The following is a 309-amino-acid chain: Porphobilinogen deaminase (309 aa).

Cys241 is modified (S-(dipyrrolylmethanemethyl)cysteine).

It belongs to the HMBS family. Monomer. Dipyrromethane is required as a cofactor.

The enzyme catalyses 4 porphobilinogen + H2O = hydroxymethylbilane + 4 NH4(+). It functions in the pathway porphyrin-containing compound metabolism; protoporphyrin-IX biosynthesis; coproporphyrinogen-III from 5-aminolevulinate: step 2/4. Its function is as follows. Tetrapolymerization of the monopyrrole PBG into the hydroxymethylbilane pre-uroporphyrinogen in several discrete steps. This chain is Porphobilinogen deaminase, found in Bacillus thuringiensis subsp. konkukian (strain 97-27).